We begin with the raw amino-acid sequence, 107 residues long: Cytochrome c-550 (107 aa).

The heme c site is built by Cys11, Cys14, His15, and Met80.

Binds 1 heme c group covalently per subunit.

The polypeptide is Cytochrome c-550 (Ancylobacter novellus (Thiobacillus novellus)).